The sequence spans 247 residues: Acetoacetate decarboxylase 1 (247 aa).

Catalysis depends on K116, which acts as the Schiff-base intermediate with acetoacetate.

It belongs to the ADC family.

It catalyses the reaction acetoacetate + H(+) = acetone + CO2. Functionally, catalyzes the conversion of acetoacetate to acetone and carbon dioxide. The sequence is that of Acetoacetate decarboxylase 1 from Mesorhizobium japonicum (strain LMG 29417 / CECT 9101 / MAFF 303099) (Mesorhizobium loti (strain MAFF 303099)).